The following is a 129-amino-acid chain: Small ribosomal subunit protein uS11 (129 aa).

It belongs to the universal ribosomal protein uS11 family. As to quaternary structure, part of the 30S ribosomal subunit. Interacts with proteins S7 and S18. Binds to IF-3.

Functionally, located on the platform of the 30S subunit, it bridges several disparate RNA helices of the 16S rRNA. Forms part of the Shine-Dalgarno cleft in the 70S ribosome. The polypeptide is Small ribosomal subunit protein uS11 (Limosilactobacillus fermentum (strain NBRC 3956 / LMG 18251) (Lactobacillus fermentum)).